Reading from the N-terminus, the 384-residue chain is Chaperone protein DnaJ (384 aa).

Positions 4–68 constitute a J domain; sequence DFYDVLGVSR…EKRQMYDQLG (65 aa). Disordered stretches follow at residues 74–105 and 113–132; these read QAQK…GMGG and NNLF…QGRD. The span at 79–105 shows a compositional bias: gly residues; the sequence is GAGGGGGGRGQGNPFGGGGNPFGGMGG. Residues 147 to 229 form a CR-type zinc finger; the sequence is GVERDVTIRR…CRGSGRVRRT (83 aa). Zn(2+) contacts are provided by cysteine 160, cysteine 163, cysteine 177, cysteine 180, cysteine 203, cysteine 206, cysteine 217, and cysteine 220. CXXCXGXG motif repeat units follow at residues 160-167, 177-184, 203-210, and 217-224; these read CPECDGEG, CSECNGSG, CRACGGEG, and CSECRGSG.

Belongs to the DnaJ family. Homodimer. Zn(2+) serves as cofactor.

The protein resides in the cytoplasm. Participates actively in the response to hyperosmotic and heat shock by preventing the aggregation of stress-denatured proteins and by disaggregating proteins, also in an autonomous, DnaK-independent fashion. Unfolded proteins bind initially to DnaJ; upon interaction with the DnaJ-bound protein, DnaK hydrolyzes its bound ATP, resulting in the formation of a stable complex. GrpE releases ADP from DnaK; ATP binding to DnaK triggers the release of the substrate protein, thus completing the reaction cycle. Several rounds of ATP-dependent interactions between DnaJ, DnaK and GrpE are required for fully efficient folding. Also involved, together with DnaK and GrpE, in the DNA replication of plasmids through activation of initiation proteins. This Haloferax mediterranei (strain ATCC 33500 / DSM 1411 / JCM 8866 / NBRC 14739 / NCIMB 2177 / R-4) (Halobacterium mediterranei) protein is Chaperone protein DnaJ.